The sequence spans 168 residues: Photosystem I assembly protein Ycf3 (168 aa).

TPR repeat units lie at residues A29 to P62, S66 to L99, and A117 to N150.

This sequence belongs to the Ycf3 family.

The protein resides in the plastid. Its subcellular location is the chloroplast thylakoid membrane. Essential for the assembly of the photosystem I (PSI) complex. May act as a chaperone-like factor to guide the assembly of the PSI subunits. In Phaeodactylum tricornutum (strain CCAP 1055/1), this protein is Photosystem I assembly protein Ycf3.